Reading from the N-terminus, the 794-residue chain is Protein sel-1 homolog 1 (794 aa).

The first 21 residues, 1-21 (MQVRVRLLLLLCAVLLGSAAA), serve as a signal peptide directing secretion. An interaction with ERLEC1, OS9 and SYVN1 region spans residues 22-737 (SSDEETNQDE…DLFTQLDMDQ (716 aa)). Residues 22–738 (SSDEETNQDE…LFTQLDMDQL (717 aa)) lie on the Lumenal side of the membrane. Residues 23-32 (SDEETNQDES) show a composition bias toward acidic residues. Disordered regions lie at residues 23–46 (SDEE…GSVK) and 73–105 (QDEE…KTYE). The 49-residue stretch at 122–170 (AHGEPCHFPFLFLDKEYDECTSDGREDGRLWCATTYDYKTDEKWGFCET) folds into the Fibronectin type-II domain. Disulfide bonds link Cys127–Cys153 and Cys141–Cys168. Sel1-like repeat units lie at residues 183 to 218 (AEAI…GMNH), 219 to 254 (TKAL…EEGS), 255 to 290 (PKGQ…LGGN), 291 to 326 (LIAH…NHVA), 373 to 409 (VQAQ…NAGN), 410 to 446 (SHAM…DMGN), 447 to 482 (PVGQ…EQGW), 483 to 518 (VDGQ…QGGH), and 519 to 554 (ILAF…ERGR). Asn195 and Asn217 each carry an N-linked (GlcNAc...) asparagine glycan. The N-linked (GlcNAc...) asparagine glycan is linked to Asn272. Positions 352–537 (NSGMLEEDLI…MHASGTGVMR (186 aa)) are important for homodimerization and oligomerization. N-linked (GlcNAc...) asparagine glycosylation is present at Asn431. Asn608 carries an N-linked (GlcNAc...) asparagine glycan. Sel1-like repeat units lie at residues 627-662 (TVAR…EQQH) and 664-699 (AQAM…EASP). An interaction with SYVN1 region spans residues 643-723 (TDVDYETAFI…VVYFLQYIRE (81 aa)). The segment at 738-794 (LLGPEWDLYLMTIIALLLGTVIAYRQRQHQDIPVPRPPGPRPAPPQQEGPPEQQPPQ) is mediates retention in the endoplasmic reticulum. A helical transmembrane segment spans residues 739 to 759 (LGPEWDLYLMTIIALLLGTVI). Residues 760–794 (AYRQRQHQDIPVPRPPGPRPAPPQQEGPPEQQPPQ) lie on the Cytoplasmic side of the membrane. The tract at residues 767 to 794 (QDIPVPRPPGPRPAPPQQEGPPEQQPPQ) is disordered. The span at 771-794 (VPRPPGPRPAPPQQEGPPEQQPPQ) shows a compositional bias: pro residues.

Belongs to the sel-1 family. As to quaternary structure, homodimer and homooligomer. May form a complex with ERLEC1, HSPA5, OS9, and SYVN1. Interacts with FOXRED2 and EDEM1. Interacts with LPL and LMF1; may stabilize the complex formed by LPL and LMF1 and thereby promote the export of LPL dimers. Component of the HRD1 complex, which comprises at least SYNV1/HRD1, DERL1/2, FAM8A1, HERPUD1/HERP, OS9, SEL1L and UBE2J1. SYNV1 assembles with SEL1L and FAM8A1 through its transmembrane domains, but interaction with its cytoplasmic domain is required to confer stability to FAM8A1 and enhance recruitment of HERPUD1. The interaction with SYNV1/HRD1 is direct. Post-translationally, N-glycosylated.

The protein resides in the endoplasmic reticulum membrane. In terms of biological role, plays a role in the endoplasmic reticulum quality control (ERQC) system also called ER-associated degradation (ERAD) involved in ubiquitin-dependent degradation of misfolded endoplasmic reticulum proteins. Enhances SYVN1 stability. Plays a role in LPL maturation and secretion. Required for normal differentiation of the pancreas epithelium, and for normal exocrine function and survival of pancreatic cells. May play a role in Notch signaling. The polypeptide is Protein sel-1 homolog 1 (Sel1l) (Rattus norvegicus (Rat)).